A 435-amino-acid chain; its full sequence is Homoserine dehydrogenase (435 aa).

Residues T13, V14, R43, and K105 each contribute to the NADPH site. Residue V14 participates in NAD(+) binding. V14, R43, and K105 together coordinate NADP(+). Residues E129, V132, G134, and I136 each contribute to the Na(+) site. K204 serves as the catalytic Proton donor. 2 disordered regions span residues 255–274 (ARGVELARAPDPDPRETPDR) and 377–402 (RCDDSEGNRRQAERRRSGRHHHPDHV). Composition is skewed to basic and acidic residues over residues 262–274 (RAPDPDPRETPDR) and 377–391 (RCDDSEGNRRQAERR).

Belongs to the homoserine dehydrogenase family. A metal cation is required as a cofactor.

It carries out the reaction L-homoserine + NADP(+) = L-aspartate 4-semialdehyde + NADPH + H(+). It catalyses the reaction L-homoserine + NAD(+) = L-aspartate 4-semialdehyde + NADH + H(+). It participates in amino-acid biosynthesis; L-methionine biosynthesis via de novo pathway; L-homoserine from L-aspartate: step 3/3. It functions in the pathway amino-acid biosynthesis; L-threonine biosynthesis; L-threonine from L-aspartate: step 3/5. In terms of biological role, catalyzes the conversion of L-aspartate-beta-semialdehyde (L-Asa) to L-homoserine (L-Hse), the third step in the biosynthesis of threonine and methionine from aspartate. The protein is Homoserine dehydrogenase (hom) of Methylobacillus glycogenes.